The following is a 257-amino-acid chain: UPF0246 protein Lcho_2652 (257 aa).

This sequence belongs to the UPF0246 family.

The sequence is that of UPF0246 protein Lcho_2652 from Leptothrix cholodnii (strain ATCC 51168 / LMG 8142 / SP-6) (Leptothrix discophora (strain SP-6)).